A 270-amino-acid chain; its full sequence is Phosphatidylglycerol--prolipoprotein diacylglyceryl transferase (270 aa).

A run of 7 helical transmembrane segments spans residues 10–30 (VAVA…LVGI), 56–76 (LIFW…VLFY), 92–112 (WKGG…AWWF), 120–140 (FFQL…AGRI), 175–195 (SQLY…NLYA), 202–222 (MAVS…VEFV), and 237–257 (VTMG…LIWL). Residue R139 participates in a 1,2-diacyl-sn-glycero-3-phospho-(1'-sn-glycerol) binding.

This sequence belongs to the Lgt family.

It localises to the cell inner membrane. The catalysed reaction is L-cysteinyl-[prolipoprotein] + a 1,2-diacyl-sn-glycero-3-phospho-(1'-sn-glycerol) = an S-1,2-diacyl-sn-glyceryl-L-cysteinyl-[prolipoprotein] + sn-glycerol 1-phosphate + H(+). It functions in the pathway protein modification; lipoprotein biosynthesis (diacylglyceryl transfer). Functionally, catalyzes the transfer of the diacylglyceryl group from phosphatidylglycerol to the sulfhydryl group of the N-terminal cysteine of a prolipoprotein, the first step in the formation of mature lipoproteins. The polypeptide is Phosphatidylglycerol--prolipoprotein diacylglyceryl transferase (Pseudomonas savastanoi pv. phaseolicola (strain 1448A / Race 6) (Pseudomonas syringae pv. phaseolicola (strain 1448A / Race 6))).